We begin with the raw amino-acid sequence, 554 residues long: MFS-type transporter tstD (554 aa).

2 stretches are compositionally biased toward polar residues: residues 1–10 (MPEPFNSTMP) and 27–38 (QDSNQPPEMSAS). Residues 1-68 (MPEPFNSTMP…ESENNEPYSV (68 aa)) are disordered. N-linked (GlcNAc...) asparagine glycosylation is present at N6. Basic and acidic residues predominate over residues 39–48 (SEKKHPENEN). Residues 76–96 (LMVLAASLAGFFSPLSASIYY) traverse the membrane as a helical segment. N107 and N114 each carry an N-linked (GlcNAc...) asparagine glycan. A run of 5 helical transmembrane segments spans residues 115-135 (LTVTTYLILQGLAPMVTASFS), 142-162 (PGYAICFIVYLAANLGLALQN), 173-193 (LQSAGSSGAIAIANGVVSDII), 202-222 (IAFASVGSILGPSLSPIIGGL), and 231-251 (WIFWFLLIFSGAFCVPFFLFF). The tract at residues 281–300 (KEKQRQQRAENEEENANRQR) is disordered. Helical transmembrane passes span 311–331 (VFVVFTNLQTVMTLCPAGVAF), 354–374 (IKVALIFLPMGVGGLISALST), and 413–433 (IALPVFCLGCVCTVLYGWLMT). An N-linked (GlcNAc...) asparagine glycan is attached at N437. A run of 3 helical transmembrane segments spans residues 442-462 (IILLFVMSWSFAAFYQVLNVL), 473-493 (MVTAVVNLLRCEIGAGMAAMI), and 504-524 (WSYTIIALIGVAATSPLLLTM).

The protein belongs to the major facilitator superfamily.

It is found in the membrane. Its function is as follows. MFS-type transporter; part of the gene cluster that mediates the biosynthesis of the antihypercholesterolemic agents phomoidrides which are dimeric anhydrides. In Talaromyces stipitatus (strain ATCC 10500 / CBS 375.48 / QM 6759 / NRRL 1006) (Penicillium stipitatum), this protein is MFS-type transporter tstD.